We begin with the raw amino-acid sequence, 750 residues long: Photosystem I P700 chlorophyll a apoprotein A1 (750 aa).

Transmembrane regions (helical) follow at residues 70-93 (VFSA…FHGA), 156-179 (LYCT…FHYH), 195-219 (LNHH…HVSL), 291-309 (IAHH…GHMY), 346-369 (WHAQ…HHMY), 385-411 (LSLF…IFMV), 433-455 (AIIS…LYIH), and 531-549 (FLVH…LILL). Residues Cys573 and Cys582 each contribute to the [4Fe-4S] cluster site. A run of 2 helical transmembrane segments spans residues 589–610 (HVFL…HFSW) and 664–686 (LSAY…MFLF). Position 675 (His675) interacts with chlorophyll a'. Chlorophyll a contacts are provided by Met683 and Tyr691. Residue Trp692 coordinates phylloquinone. Residues 724–744 (AVGVTHYLLGGIATTWAFFLA) traverse the membrane as a helical segment.

The protein belongs to the PsaA/PsaB family. In terms of assembly, the PsaA/B heterodimer binds the P700 chlorophyll special pair and subsequent electron acceptors. PSI consists of a core antenna complex that captures photons, and an electron transfer chain that converts photonic excitation into a charge separation. The eukaryotic PSI reaction center is composed of at least 11 subunits. It depends on P700 is a chlorophyll a/chlorophyll a' dimer, A0 is one or more chlorophyll a, A1 is one or both phylloquinones and FX is a shared 4Fe-4S iron-sulfur center. as a cofactor.

The protein localises to the plastid. It localises to the chloroplast thylakoid membrane. It carries out the reaction reduced [plastocyanin] + hnu + oxidized [2Fe-2S]-[ferredoxin] = oxidized [plastocyanin] + reduced [2Fe-2S]-[ferredoxin]. PsaA and PsaB bind P700, the primary electron donor of photosystem I (PSI), as well as the electron acceptors A0, A1 and FX. PSI is a plastocyanin-ferredoxin oxidoreductase, converting photonic excitation into a charge separation, which transfers an electron from the donor P700 chlorophyll pair to the spectroscopically characterized acceptors A0, A1, FX, FA and FB in turn. Oxidized P700 is reduced on the lumenal side of the thylakoid membrane by plastocyanin. The polypeptide is Photosystem I P700 chlorophyll a apoprotein A1 (Daucus carota (Wild carrot)).